We begin with the raw amino-acid sequence, 277 residues long: Shikimate dehydrogenase (NADP(+)) (277 aa).

Residues 20–22 and Thr-67 each bind shikimate; that span reads SLS. Residue Lys-71 is the Proton acceptor of the active site. Residue Asp-83 participates in NADP(+) binding. 2 residues coordinate shikimate: Asn-92 and Asp-107. Residues 131-135 and Ile-219 contribute to the NADP(+) site; that span reads GAGGV. Tyr-221 serves as a coordination point for shikimate. Position 242 (Gly-242) interacts with NADP(+).

The protein belongs to the shikimate dehydrogenase family. Homodimer.

The catalysed reaction is shikimate + NADP(+) = 3-dehydroshikimate + NADPH + H(+). Its pathway is metabolic intermediate biosynthesis; chorismate biosynthesis; chorismate from D-erythrose 4-phosphate and phosphoenolpyruvate: step 4/7. Involved in the biosynthesis of the chorismate, which leads to the biosynthesis of aromatic amino acids. Catalyzes the reversible NADPH linked reduction of 3-dehydroshikimate (DHSA) to yield shikimate (SA). This is Shikimate dehydrogenase (NADP(+)) from Pelobacter propionicus (strain DSM 2379 / NBRC 103807 / OttBd1).